The sequence spans 211 residues: Ribonuclease HII (211 aa).

One can recognise an RNase H type-2 domain in the interval 16–205; the sequence is APVCGVDEAG…VKAALAAAAV (190 aa). A divalent metal cation is bound by residues Asp-22, Glu-23, and Asp-114.

It belongs to the RNase HII family. Requires Mn(2+) as cofactor. Mg(2+) is required as a cofactor.

It localises to the cytoplasm. The catalysed reaction is Endonucleolytic cleavage to 5'-phosphomonoester.. Functionally, endonuclease that specifically degrades the RNA of RNA-DNA hybrids. The chain is Ribonuclease HII (rnhB) from Caulobacter vibrioides (strain ATCC 19089 / CIP 103742 / CB 15) (Caulobacter crescentus).